We begin with the raw amino-acid sequence, 262 residues long: UPF0619 GPI-anchored membrane protein C1322.10 (262 aa).

Positions 1–20 (MLARVGTTLFFLANALAAYA) are cleaved as a signal peptide. Disordered stretches follow at residues 136 to 165 (STSASSTSSSTATPSSSSTTSSSSSSSSST) and 175 to 194 (ISSSASSSVSSSSASSSGSI). N-linked (GlcNAc...) asparagine glycans are attached at residues asparagine 207 and asparagine 227. Residue asparagine 242 is the site of GPI-like-anchor amidated asparagine attachment. The propeptide at 243–262 (GVAQLSVAACMGIAALMLIA) is removed in mature form.

This sequence belongs to the UPF0619 family.

The protein localises to the golgi apparatus membrane. Its subcellular location is the cell membrane. In Schizosaccharomyces pombe (strain 972 / ATCC 24843) (Fission yeast), this protein is UPF0619 GPI-anchored membrane protein C1322.10.